A 224-amino-acid chain; its full sequence is MGIRDWPAAERPREKLLEQGASALSDAELLAIFLRTGVAGQTAVDLARHLLNDFGGLRALLEADRAAFSRRLGLGPAKFAQLQAVLEMSRRHLAERLRRDPALESPQAVRDYLKARLRHEPHEVFGCLFLDAKHRVLAFEVLFQGTVDGASVYPRQVLKRALAHNAAALILTHNHPSGIAEPSQADFSLTRRLKEALALVDVRVLDHFIVGDGEPLSMAEQGWL.

The region spanning Ala-102 to Leu-224 is the MPN domain. Positions 173, 175, and 186 each coordinate Zn(2+). A JAMM motif motif is present at residues His-173–Asp-186.

It belongs to the UPF0758 family.

The protein is UPF0758 protein Avin_02940 of Azotobacter vinelandii (strain DJ / ATCC BAA-1303).